Reading from the N-terminus, the 89-residue chain is Large ribosomal subunit protein bL27 (89 aa).

It belongs to the bacterial ribosomal protein bL27 family.

This Cereibacter sphaeroides (strain ATCC 17029 / ATH 2.4.9) (Rhodobacter sphaeroides) protein is Large ribosomal subunit protein bL27.